A 66-amino-acid polypeptide reads, in one-letter code: Large ribosomal subunit protein bL31 (66 aa).

Zn(2+) contacts are provided by C16, C18, C36, and C39.

This sequence belongs to the bacterial ribosomal protein bL31 family. Type A subfamily. Part of the 50S ribosomal subunit. Requires Zn(2+) as cofactor.

In terms of biological role, binds the 23S rRNA. In Bacillus licheniformis (strain ATCC 14580 / DSM 13 / JCM 2505 / CCUG 7422 / NBRC 12200 / NCIMB 9375 / NCTC 10341 / NRRL NRS-1264 / Gibson 46), this protein is Large ribosomal subunit protein bL31.